Reading from the N-terminus, the 3063-residue chain is MRSRLPPALAALGAALLLSSIEAEVDPPSDLNFKIIDENTVHMSWAKPVDPIVGYRITVDPTTDGPTKEFTLSASTTETLLSELVPETEYVVTITSYDEVEESVPVIGQLTIQTGSSTKPVEKKPGKTEIQKCSVSAWTDLVFLVDGSWSVGRNNFKYILDFIAALVSAFDIGEEKTRVGVVQYSSDTRTEFNLNQYYQRDELLAAIKKIPYKGGNTMTGDAIDYLVKNTFTESAGARVGFPKVAIIITDGKSQDEVEIPARELRNVGVEVFSLGIKAADAKELKQIASTPSLNHVFNVANFDAIVDIQNEIISQVCSGVDEQLGELVSGEEVVEPPSNLIAMEVSSKYVKLNWNPSPSPVTGYKVILTPMTAGSRQHALSVGPQTTTLSVRDLSADTEYQISVSAMKGMTSSEPISIMEKTQPMKVQVECSRGVDIKADIVFLVDGSYSIGIANFVKVRAFLEVLVKSFEISPNRVQISLVQYSRDPHTEFTLKKFTKVEDIIEAINTFPYRGGSTNTGKAMTYVREKIFVPSKGSRSNVPKVMILITDGKSSDAFRDPAIKLRNSDVEIFAVGVKDAVRSELEAIASPPAETHVFTVEDFDAFQRISFELTQSICLRIEQELAAIKKKAYVPPKDLSFSEVTSYGFKTNWSPAGENVFSYHITYKEAAGDDEVTVVEPASSTSVVLSSLKPETLYLVNVTAEYEDGFSIPLAGEETTEEVKGAPRNLKVTDETTDSFKITWTQAPGRVLRYRIIYRPVAGGESREVTTPPNQRRRTLENLIPDTKYEVSVIPEYFSGPGTPLTGNAATEEVRGNPRDLRVSDPTTSTMKLSWSGAPGKVKQYLVTYTPVAGGETQEVTVRGDTTNTVLQGLKEGTQYALSVTALYASGAGDALFGEGTTLEERGSPQDLVTKDITDTSIGAYWTSAPGMVRGYRVSWKSLYDDVDTGEKNLPEDAIHTMIENLQPETKYRISVFATYSSGEGEPLTGDATTELSQDSKTLKVDEETENTMRVTWKPAPGKVVNYRVVYRPHGRGKQMVAKVPPTVTSTVLKRLQPQTTYDITVLPIYKMGEGKLRQGSGTTASRFKSPRNLKTSDPTMSSFRVTWEPAPGEVKGYKVTFHPTGDDRRLGELVVGPYDNTVVLEELRAGTTYKVNVFGMFDGGESSPLVGQEMTTLSDTTVMPILSSGMECLTRAEADIVLLVDGSWSIGRANFRTVRSFISRIVEVFDIGPKRVQIALAQYSGDPRTEWQLNAHRDKKSLLQAVANLPYKGGNTLTGMALNFIRQQNFRTQAGMRPRARKIGVLITDGKSQDDVEAPSKKLKDEGVELFAIGIKNADEVELKMIATDPDDTHAYNVADFESLSRIVDDLTINLCNSVKGPGDLEAPSNLVISERTHRSFRVSWTPPSDSVDRYKVEYYPVSGGKRQEFYVSRMETSTVLKDLKPETEYVVNVYSVVEDEYSEPLKGTEKTLPVPVVSLNIYDVGPTTMHVQWQPVGGATGYILSYKPVKDTEPTRPKEVRLGPTVNDMQLTDLVPNTEYAVTVQAVLHDLTSEPVTVREVTLPLPRPQDLKLRDVTHSTMNVFWEPVPGKVRKYIVRYKTPEEDVKEVEVDRSETSTSLKDLFSQTLYTVSVSAVHDEGESPPVTAQETTRPVPAPTNLKITEVTSEGFRGTWDHGASDVSLYRITWAPFGSSDKMETILNGDENTLVFENLNPNTIYEVSITAIYPDESESDDLIGSERTLPILTTQAPKSGPRNLQVYNATSNSLTVKWDPASGRVQKYRITYQPSTGEGNEQTTTIGGRQNSVVLQKLKPDTPYTITVSSLYPDGEGGRMTGRGKTKPLNTVRNLRVYDPSTSTLNVRWDHAEGNPRQYKLFYAPAAGGPEELVPIPGNTNYAILRNLQPDTSYTVTVVPVYTEGDGGRTSDTGRTLMRGLARNVQVYNPTPNSLDVRWDPAPGPVLQYRVVYSPVDGTRPSESIVVPGNTRMVHLERLIPDTLYSVNLVALYSDGEGNPSPAQGRTLPRSGPRNLRVFGETTNSLSVAWDHADGPVQQYRIIYSPTVGDPIDEYTTVPGRRNNVILQPLQPDTPYKITVIAVYEDGDGGHLTGNGRTVGLLPPQNIHISDEWYTRFRVSWDPSPSPVLGYKIVYKPVGSNEPMEAFVGEMTSYTLHNLNPSTTYDVNVYAQYDSGLSVPLTDQGTTLYLNVTDLKTYQIGWDTFCVKWSPHRAATSYRLKLSPADGTRGQEITVRGSETSHCFTGLSPDTDYGVTVFVQTPNLEGPGVSVKEHTTVKPTEAPTEPPTPPPPPTIPPARDVCKGAKADIVFLTDASWSIGDDNFNKVVKFIFNTVGGFDEISPAGIQVSFVQYSDEVKSEFKLNTYNDKALALGALQNIRYRGGNTRTGKALTFIKEKVLTWESGMRKNVPKVLVVVTDGRSQDEVKKAALVIQQSGFSVFVVGVADVDYNELANIASKPSERHVFIVDDFESFEKIEDNLITFVCETATSSCPLIYLDGYTSPGFKMLEAYNLTEKNFASVQGVSLESGSFPSYSAYRIQKNAFVNQPTADLHPNGLPPSYTIILLFRLLPETPSDPFAIWQITDRDYKPQVGVIADPSSKTLSFFNKDTRGEVQTVTFDTEEVKTLFYGSFHKVHIVVTSKSVKIYIDCYEIIEKDIKEAGNITTDGYEILGKLLKGERKSAAFQIQSFDIVCSPVWTSRDRCCDIPSRRDEGKCPAFPNSCTCTQDSVGPPGPPGPAGGPGAKGPRGERGISGAIGPPGPRGDIGPPGPQGPPGPQGPNGLSIPGEQGRQGMKGDAGEPGLPGRTGTPGLPGPPGPMGPPGDRGFTGKDGAMGPRGPPGPPGSPGSPGVTGPSGKPGKPGDHGRPGPSGLKGEKGDRGDIASQNMMRAVARQVCEQLISGQMNRFNQMLNQIPNDYQSSRNQPGPPGPPGPPGSAGARGEPGPGGRPGFPGTPGMQGPPGERGLPGEKGERGTGSSGPRGLPGPPGPQGESRTGPPGSTGSRGPPGPPGRPGNSGIRGPPGPPGYCDSSQCASIPYNGQGYPGSG.

Residues 1 to 23 form the signal peptide; it reads MRSRLPPALAALGAALLLSSIEA. One can recognise a Fibronectin type-III 1 domain in the interval 27-117; the sequence is PPSDLNFKII…GQLTIQTGSS (91 aa). Residues 140–316 enclose the VWFA 1 domain; it reads DLVFLVDGSW…DIQNEIISQV (177 aa). Ser329 is a glycosylation site (O-linked (Xyl...) (chondroitin sulfate) serine). The 91-residue stretch at 336-426 folds into the Fibronectin type-III 2 domain; that stretch reads PPSNLIAMEV…SIMEKTQPMK (91 aa). Positions 440–616 constitute a VWFA 2 domain; it reads DIVFLVDGSY…RISFELTQSI (177 aa). 6 consecutive Fibronectin type-III domains span residues 634-722, 725-816, 817-905, 907-998, 999-1087, and 1089-1179; these read PPKD…TEEV, APRN…VRGN, PRDL…LEER, SPQD…LSQD, SKTL…ASRF, and SPRN…TLSD. A glycan (N-linked (GlcNAc...) asparagine) is linked at Asn700. Ser798 is a glycosylation site (O-linked (Xyl...) (chondroitin sulfate) serine). A disordered region spans residues 799–830; it reads GPGTPLTGNAATEEVRGNPRDLRVSDPTTSTM. The span at 811–822 shows a compositional bias: basic and acidic residues; it reads EEVRGNPRDLRV. A Cell attachment site motif is present at residues 862–864; it reads RGD. O-linked (Xyl...) (chondroitin sulfate) serine glycans are attached at residues Ser889 and Ser981. Residues 1077–1099 are disordered; it reads RQGSGTTASRFKSPRNLKTSDPT. Positions 1079–1099 are enriched in polar residues; sequence GSGTTASRFKSPRNLKTSDPT. The region spanning 1199-1371 is the VWFA 3 domain; sequence DIVLLVDGSW…ESLSRIVDDL (173 aa). 10 consecutive Fibronectin type-III domains span residues 1387 to 1476, 1477 to 1567, 1568 to 1658, 1659 to 1754, 1755 to 1849, 1850 to 1935, 1936 to 2026, 2027 to 2117, 2118 to 2206, and 2207 to 2294; these read APSN…LPVP, VVSL…LPLP, RPQD…VPAP, TNLK…APKS, GPRN…TVRN, LRVY…LMRG, LARN…LPRS, GPRN…VGLL, PPQN…LYLN, and VTDL…TVKP. N-linked (GlcNAc...) asparagine glycosylation occurs at Asn1763. N-linked (GlcNAc...) asparagine glycosylation is present at Asn2206. The disordered stretch occupies residues 2283 to 2312; sequence GVSVKEHTTVKPTEAPTEPPTPPPPPTIPP. Residues 2299-2311 are compositionally biased toward pro residues; sequence TEPPTPPPPPTIP. The VWFA 4 domain maps to 2323–2496; sequence DIVFLTDASW…ESFEKIEDNL (174 aa). A nonhelical region (NC3) region spans residues 2451-2746; the sequence is SGFSVFVVGV…NSCTCTQDSV (296 aa). The Laminin G-like domain occupies 2520–2712; sequence GFKMLEAYNL…IQSFDIVCSP (193 aa). 2 N-linked (GlcNAc...) asparagine glycosylation sites follow: Asn2528 and Asn2679. Disordered regions lie at residues 2743-2896 and 2932-3063; these read QDSV…GDRG and NDYQ…PGSG. Collagen-like domains follow at residues 2747–2798, 2802–2852, 2853–2898, and 2941–2990; these read GPPG…GPNG, PGEQ…AMGP, RGPP…RGDI, and PGPP…GERG. The interval 2747 to 2898 is triple-helical region (COL2) with 1 imperfection; the sequence is GPPGPPGPAG…KGEKGDRGDI (152 aa). The short motif at 2779 to 2781 is the Cell attachment site element; sequence RGD. Over residues 2784–2794 the composition is skewed to pro residues; the sequence is PPGPQGPPGPQ. Positions 2817–2826 are enriched in low complexity; that stretch reads PGLPGRTGTP. Pro residues-rich tracts occupy residues 2828–2837 and 2853–2862; these read LPGPPGPMGP and RGPPGPPGSP. The segment covering 2864-2874 has biased composition (low complexity); that stretch reads SPGVTGPSGKP. Positions 2895–2897 match the Cell attachment site motif; sequence RGD. The segment at 2899–2941 is nonhelical region (NC2); that stretch reads ASQNMMRAVARQVCEQLISGQMNRFNQMLNQIPNDYQSSRNQP. Over residues 2941-2950 the composition is skewed to pro residues; sequence PGPPGPPGPP. Positions 2942-3044 are triple-helical region (COL1) with 2 imperfections; the sequence is GPPGPPGPPG…RGPPGPPGYC (103 aa). 4-hydroxyproline occurs at positions 2944, 2947, 2950, 2959, 2965, 2968, 2971, 2983, 3000, 3003, 3014, 3023, 3026, and 3029. Residues 2957–2966 show a composition bias toward gly residues; the sequence is GEPGPGGRPG. Over residues 3006–3020 the composition is skewed to low complexity; the sequence is QGESRTGPPGSTGSR. The interval 3045-3063 is nonhelical region (NC1); it reads DSSQCASIPYNGQGYPGSG.

It belongs to the fibril-associated collagens with interrupted helices (FACIT) family. In terms of assembly, trimer of identical chains each containing 190 kDa of non-triple-helical sequences. Post-translationally, the triple-helical tail is stabilized by disulfide bonds at each end. Hydroxylation on proline residues within the sequence motif, GXPG, is most likely to be 4-hydroxy as this fits the requirement for 4-hydroxylation in vertebrates. In terms of processing, isoform 1 O-glycosylation; glycosaminoglycan of chondroitin-sulfate type. In terms of tissue distribution, found in collagen I-containing tissues: both isoform 1 and isoform 2 appear in amnion, chorion, skeletal muscle, small intestine, and in cell culture of dermal fibroblasts, keratinocytes and endothelial cells. Only isoform 2 is found in lung, placenta, kidney and a squamous cell carcinoma cell line. Isoform 1 is also present in the corneal epithelial Bowman's membrane (BM) and the interfibrillar matrix of the corneal stroma, but it is not detected in the limbal BM.

Its subcellular location is the secreted. It localises to the extracellular space. The protein resides in the extracellular matrix. In terms of biological role, type XII collagen interacts with type I collagen-containing fibrils, the COL1 domain could be associated with the surface of the fibrils, and the COL2 and NC3 domains may be localized in the perifibrillar matrix. In Homo sapiens (Human), this protein is Collagen alpha-1(XII) chain (COL12A1).